The sequence spans 258 residues: Alcohol dehydrogenase 2 (258 aa).

An NAD(+)-binding site is contributed by 9–33 (IFVGGLGFIGYEACKQLMAKNMASF). A substrate-binding site is contributed by Ser137. Catalysis depends on Tyr150, which acts as the Proton acceptor.

It belongs to the short-chain dehydrogenases/reductases (SDR) family. As to quaternary structure, homodimer.

The enzyme catalyses a primary alcohol + NAD(+) = an aldehyde + NADH + H(+). It carries out the reaction a secondary alcohol + NAD(+) = a ketone + NADH + H(+). The sequence is that of Alcohol dehydrogenase 2 (ADH2) from Ceratitis capitata (Mediterranean fruit fly).